A 186-amino-acid polypeptide reads, in one-letter code: Ribosome-recycling factor (186 aa).

The protein belongs to the RRF family.

It localises to the cytoplasm. Responsible for the release of ribosomes from messenger RNA at the termination of protein biosynthesis. May increase the efficiency of translation by recycling ribosomes from one round of translation to another. This Azorhizobium caulinodans (strain ATCC 43989 / DSM 5975 / JCM 20966 / LMG 6465 / NBRC 14845 / NCIMB 13405 / ORS 571) protein is Ribosome-recycling factor.